A 562-amino-acid chain; its full sequence is Putative transport protein PC1_1686 (562 aa).

A run of 6 helical transmembrane segments spans residues L8–G28, L32–Q52, F66–F86, F93–F113, W116–V136, and H158–A178. RCK C-terminal domains lie at L202 to D288 and V292 to F373. A run of 5 helical transmembrane segments spans residues L383–F403, F406–L426, F447–S467, S478–L498, and G537–W557.

The protein belongs to the AAE transporter (TC 2.A.81) family. YbjL subfamily.

The protein localises to the cell membrane. This chain is Putative transport protein PC1_1686, found in Pectobacterium carotovorum subsp. carotovorum (strain PC1).